A 1050-amino-acid chain; its full sequence is uncharacterized protein (1050 aa).

3 coiled-coil regions span residues 1–420 (MEKV…TAKM), 463–627 (YSLL…IREL), and 692–981 (NDSK…NLLS).

This is an uncharacterized protein from Arabidopsis thaliana (Mouse-ear cress).